A 1166-amino-acid polypeptide reads, in one-letter code: Zinc finger CCHC domain-containing protein 2 (1166 aa).

Disordered regions lie at residues 1-85 (MLRM…GGHA), 205-240 (RAEGSRGSVEDEPSGDGEQDAEKDGPGPEGSGCAKL), 550-668 (SSAD…ARFS), and 904-982 (PASF…ISAV). Residues 43–64 (PPPPPTGLPRGPPPPPSPPRGL) show a composition bias toward pro residues. Low complexity predominate over residues 65-76 (EPPVASGPTAGA). Residues 214–223 (EDEPSGDGEQ) are compositionally biased toward acidic residues. Positions 572–587 (PQVEKEKVKKTEDRLN) are enriched in basic and acidic residues. Residues 624–633 (SSESYSSPSS) are compositionally biased toward low complexity. The segment covering 634-653 (PRHDGRESLESEEEKDRDSD) has biased composition (basic and acidic residues). Positions 919-947 (LPTQNSSALNAATSAQPASTGISPSQSTV) are enriched in polar residues. Residues 949–963 (PAVPTHTPGPAPSPS) show a composition bias toward pro residues. Residues 964-982 (PALTHSTAQSDSTSYISAV) are compositionally biased toward polar residues. Residues 1119–1136 (VSCYNCGVSGHYAQDCKQ) form a CCHC-type zinc finger.

The protein is Zinc finger CCHC domain-containing protein 2 (Zcchc2) of Mus musculus (Mouse).